Consider the following 97-residue polypeptide: Defensin-like protein 245 (97 aa).

Positions 1–24 (MKFAAILLVTCVLFSLLPSHLSQG) are cleaved as a signal peptide. 4 cysteine pairs are disulfide-bonded: C39–C96, C50–C79, C58–C89, and C77–C91.

Belongs to the DEFL family. As to expression, flower buds and roots.

It localises to the secreted. The sequence is that of Defensin-like protein 245 (SCRL4) from Arabidopsis thaliana (Mouse-ear cress).